A 110-amino-acid polypeptide reads, in one-letter code: Nucleoid-associated protein PERMA_0533 (110 aa).

Belongs to the YbaB/EbfC family. Homodimer.

The protein localises to the cytoplasm. It localises to the nucleoid. Functionally, binds to DNA and alters its conformation. May be involved in regulation of gene expression, nucleoid organization and DNA protection. This Persephonella marina (strain DSM 14350 / EX-H1) protein is Nucleoid-associated protein PERMA_0533.